We begin with the raw amino-acid sequence, 521 residues long: Cytochrome P450 monooxygenase bet2 (521 aa).

The chain crosses the membrane as a helical span at residues 23 to 43 (SNWRFALFVAATLLTSYIVIV). N-linked (GlcNAc...) asparagine glycosylation is present at Asn-188. Cys-461 contacts heme.

Belongs to the cytochrome P450 family. The cofactor is heme.

It localises to the membrane. It catalyses the reaction dehydroprobetaenone I + NADPH + O2 + H(+) = epoxybetaenone + NADP(+) + H2O. The enzyme catalyses dehydroprobetaenone I + 3 NADPH + 3 O2 + 3 H(+) = betaenone C + 3 NADP(+) + 3 H2O. Its pathway is mycotoxin biosynthesis. In terms of biological role, cytochrome P450 monooxygenase; part of the gene cluster that mediates the biosynthesis of betaenones, phytotoxic polyketides involved in leaf spot disease in sugar beets. The first step of the pathway is the synthesis of dehydroprobetaenone I by the polyketide synthase bet1 and the enoyl reductase bet3 via condensation of one acetyl-CoA starter unit with 7 malonyl-CoA units and 5 methylations. The C-terminal reductase (R) domain of bet1 catalyzes the reductive release of the polyketide chain. Because bet1 lacks a designated enoylreductase (ER) domain, the required activity is provided the enoyl reductase bet3. The short-chain dehydrogenase/reductase bet4 then catalyzes reduction of dehydroprobetaenone I to probetaenone I. The cytochrome P450 monooxygenase bet2 catalyzes successive epoxidation, oxidation (resulting from epoxide opening) and hydroxylation to install a tertiary alcohol in the decaline ring to yield betaenone C from dehydroprobetaenone I and betaenone B from probetaenone I. The FAD-linked oxidoreductase (orf1) is probably responsible for the conversion of betaenone C to betaenone A via an intramolecular aldol reaction between C-1 and C-17 to form the bridged tricyclic system in betaenone A. In Neocamarosporium betae (Beet black rot fungus), this protein is Cytochrome P450 monooxygenase bet2.